Consider the following 224-residue polypeptide: Probable septum site-determining protein MinC (224 aa).

It belongs to the MinC family. Interacts with MinD and FtsZ.

Cell division inhibitor that blocks the formation of polar Z ring septums. Rapidly oscillates between the poles of the cell to destabilize FtsZ filaments that have formed before they mature into polar Z rings. Prevents FtsZ polymerization. This chain is Probable septum site-determining protein MinC, found in Shewanella amazonensis (strain ATCC BAA-1098 / SB2B).